Consider the following 409-residue polypeptide: Putative lipoate-protein ligase A (409 aa).

The 185-residue stretch at 146-330 (GPDNCRLLFY…RFQKTFKVDG (185 aa)) folds into the BPL/LPL catalytic domain. Residues R188, 193–196 (GTVL), and K249 each bind ATP. K249 lines the (R)-lipoate pocket.

It belongs to the LplA family. As to quaternary structure, monomer.

It carries out the reaction L-lysyl-[lipoyl-carrier protein] + (R)-lipoate + ATP = N(6)-[(R)-lipoyl]-L-lysyl-[lipoyl-carrier protein] + AMP + diphosphate + H(+). It functions in the pathway protein modification; protein lipoylation via exogenous pathway; protein N(6)-(lipoyl)lysine from lipoate: step 1/2. The protein operates within protein modification; protein lipoylation via exogenous pathway; protein N(6)-(lipoyl)lysine from lipoate: step 2/2. Catalyzes both the ATP-dependent activation of exogenously supplied lipoate to lipoyl-AMP and the transfer of the activated lipoyl onto the lipoyl domains of lipoate-dependent enzymes. This chain is Putative lipoate-protein ligase A (AIM22), found in Saccharomyces cerevisiae (strain RM11-1a) (Baker's yeast).